We begin with the raw amino-acid sequence, 458 residues long: Phosphoglucosamine mutase (458 aa).

S106 functions as the Phosphoserine intermediate in the catalytic mechanism. Residues S106, D247, D249, and D251 each coordinate Mg(2+). S106 is modified (phosphoserine).

Belongs to the phosphohexose mutase family. Mg(2+) is required as a cofactor. Post-translationally, activated by phosphorylation.

The enzyme catalyses alpha-D-glucosamine 1-phosphate = D-glucosamine 6-phosphate. Functionally, catalyzes the conversion of glucosamine-6-phosphate to glucosamine-1-phosphate. The protein is Phosphoglucosamine mutase of Chlamydia caviae (strain ATCC VR-813 / DSM 19441 / 03DC25 / GPIC) (Chlamydophila caviae).